Reading from the N-terminus, the 129-residue chain is Thioredoxin-like 3-3 (129 aa).

Basic and acidic residues predominate over residues 1-10 (MEEGEAKKTG). A disordered region spans residues 1 to 30 (MEEGEAKKTGLEGTGLSLPGSSHGNLRSAG). Residues 7–129 (KKTGLEGTGL…RLHDRLWLHS (123 aa)) form the Thioredoxin domain. Residues 19–30 (PGSSHGNLRSAG) are compositionally biased toward polar residues. Catalysis depends on nucleophile residues Cys-58 and Cys-61. Cysteines 58 and 61 form a disulfide.

It belongs to the thioredoxin family.

Functionally, probable thiol-disulfide oxidoreductase that may participate in various redox reactions. In Oryza sativa subsp. japonica (Rice), this protein is Thioredoxin-like 3-3.